Here is a 439-residue protein sequence, read N- to C-terminus: Telomeric repeat-binding factor 1 (439 aa).

The interval 1-36 (MAEDVSSAAPSPRGCADGRDADPTEEQMAETERNDE) is disordered. Alanine 2 carries the N-acetylalanine modification. Serine 11 carries the post-translational modification Phosphoserine. Positions 23-36 (PTEEQMAETERNDE) are enriched in acidic residues. The TRFH mediates dimerization stretch occupies residues 58–268 (EEEEEDAGLV…AAAKVVESKR (211 aa)). Residue lysine 213 forms a Glycyl lysine isopeptide (Lys-Gly) (interchain with G-Cter in SUMO2) linkage. Serine 219 is modified (phosphoserine; by ATM). An interaction with RLIM region spans residues 265–378 (ESKRTRTITS…PVTPEKHRAR (114 aa)). A disordered region spans residues 266 to 311 (SKRTRTITSQDKPSGNDVEMETEANLDTRKSVSDKQSAVTESSEGT). Positions 299 to 311 (DKQSAVTESSEGT) are enriched in polar residues. Lysine 325 is covalently cross-linked (Glycyl lysine isopeptide (Lys-Gly) (interchain with G-Cter in SUMO2)). Positions 326–375 (LQHGTQQQDLNKKERRVGTPQSTKKKKESRRATESRIPVSKSQPVTPEKH) are disordered. The short motif at 337-356 (KKERRVGTPQSTKKKKESRR) is the Nuclear localization signal element. Lysine 366 participates in a covalent cross-link: Glycyl lysine isopeptide (Lys-Gly) (interchain with G-Cter in SUMO2). The HTH myb-type domain maps to 375-432 (HRARKRQAWLWEEDKNLRSGVRKYGEGNWSKILLHYKFNNRTSVMLKDRWRTMKKLKL). Residues 403 to 428 (WSKILLHYKFNNRTSVMLKDRWRTMK) constitute a DNA-binding region (H-T-H motif).

As to quaternary structure, homodimer; can contain both isoforms. Found in a complex with POT1; TINF2 and TNKS1. Interacts with ATM, TINF2, TNKS1, TNKS2, PINX1, NEK2 and MAPRE1. Component of the shelterin complex (telosome) composed of TERF1, TERF2, TINF2, TERF2IP ACD and POT1. Interacts with RLIM (via N-terminus). Interacts with FBXO4. Interaction with TINF2 protects against interaction with FBXO4 and subsequent polyubiquitination and proteasomal degradation. Interacts with GNL3L; this interaction promotes homodimerization. Interacts with TIN2. Interacts with RTEL1. Interactions with GNL3L and TIN2 are mutually exclusive. Interacts with CCDC79/TERB1. Interacts with TRIOBP isoform 1; mediates TERF1 localization to the centrosome. In terms of processing, phosphorylated preferentially on Ser-219 in an ATM-dependent manner in response to ionizing DNA damage. ADP-ribosylation by TNKS1 or TNKS2 diminishes its ability to bind to telomeric DNA. Post-translationally, ubiquitinated by RLIM/RNF12, leading to its degradation by the proteasome. Ubiquitinated by a SCF (SKP1-CUL1-F-box protein) ubiquitin-protein ligase complex, leading to its degradation by the proteasome. Highly expressed and ubiquitous. Isoform Pin2 predominates.

It localises to the nucleus. Its subcellular location is the cytoplasm. The protein resides in the cytoskeleton. It is found in the spindle. The protein localises to the chromosome. It localises to the telomere. Its function is as follows. Binds the telomeric double-stranded 5'-TTAGGG-3' repeat and negatively regulates telomere length. Involved in the regulation of the mitotic spindle. Component of the shelterin complex (telosome) that is involved in the regulation of telomere length and protection. Shelterin associates with arrays of double-stranded 5'-TTAGGG-3' repeats added by telomerase and protects chromosome ends; without its protective activity, telomeres are no longer hidden from the DNA damage surveillance and chromosome ends are inappropriately processed by DNA repair pathways. This Homo sapiens (Human) protein is Telomeric repeat-binding factor 1 (TERF1).